A 307-amino-acid chain; its full sequence is Coenzyme PQQ synthesis protein B (307 aa).

This sequence belongs to the PqqB family.

The protein operates within cofactor biosynthesis; pyrroloquinoline quinone biosynthesis. May be involved in the transport of PQQ or its precursor to the periplasm. This Gluconacetobacter diazotrophicus (strain ATCC 49037 / DSM 5601 / CCUG 37298 / CIP 103539 / LMG 7603 / PAl5) protein is Coenzyme PQQ synthesis protein B.